A 515-amino-acid polypeptide reads, in one-letter code: ATP synthase subunit alpha (515 aa).

169–176 (GDRQTGKT) is a binding site for ATP.

The protein belongs to the ATPase alpha/beta chains family. In terms of assembly, F-type ATPases have 2 components, CF(1) - the catalytic core - and CF(0) - the membrane proton channel. CF(1) has five subunits: alpha(3), beta(3), gamma(1), delta(1), epsilon(1). CF(0) has three main subunits: a(1), b(2) and c(9-12). The alpha and beta chains form an alternating ring which encloses part of the gamma chain. CF(1) is attached to CF(0) by a central stalk formed by the gamma and epsilon chains, while a peripheral stalk is formed by the delta and b chains.

Its subcellular location is the cell inner membrane. It catalyses the reaction ATP + H2O + 4 H(+)(in) = ADP + phosphate + 5 H(+)(out). Functionally, produces ATP from ADP in the presence of a proton gradient across the membrane. The alpha chain is a regulatory subunit. The chain is ATP synthase subunit alpha from Myxococcus xanthus.